We begin with the raw amino-acid sequence, 122 residues long: Small ribosomal subunit protein uS13 (122 aa).

A disordered region spans residues 95–122 (GLPVRGQRTRTNARTRKGPRKTVAKKKK).

This sequence belongs to the universal ribosomal protein uS13 family. In terms of assembly, part of the 30S ribosomal subunit. Forms a loose heterodimer with protein S19. Forms two bridges to the 50S subunit in the 70S ribosome.

Its function is as follows. Located at the top of the head of the 30S subunit, it contacts several helices of the 16S rRNA. In the 70S ribosome it contacts the 23S rRNA (bridge B1a) and protein L5 of the 50S subunit (bridge B1b), connecting the 2 subunits; these bridges are implicated in subunit movement. Contacts the tRNAs in the A and P-sites. This is Small ribosomal subunit protein uS13 from Thermoanaerobacter pseudethanolicus (strain ATCC 33223 / 39E) (Clostridium thermohydrosulfuricum).